A 635-amino-acid chain; its full sequence is Threonine--tRNA ligase (635 aa).

Residues 1-61 (MINISFPDGS…DNDCKFRILT (61 aa)) form the TGS domain. The tract at residues 242 to 533 (DHRKLGRELD…LIEEYAGRFP (292 aa)) is catalytic. Zn(2+) contacts are provided by Cys333, His384, and His510.

This sequence belongs to the class-II aminoacyl-tRNA synthetase family. As to quaternary structure, homodimer. Requires Zn(2+) as cofactor.

Its subcellular location is the cytoplasm. The enzyme catalyses tRNA(Thr) + L-threonine + ATP = L-threonyl-tRNA(Thr) + AMP + diphosphate + H(+). In terms of biological role, catalyzes the attachment of threonine to tRNA(Thr) in a two-step reaction: L-threonine is first activated by ATP to form Thr-AMP and then transferred to the acceptor end of tRNA(Thr). Also edits incorrectly charged L-seryl-tRNA(Thr). This chain is Threonine--tRNA ligase, found in Rickettsia rickettsii (strain Sheila Smith).